Here is a 186-residue protein sequence, read N- to C-terminus: MPVLNTRTSYPNIDFHGTKVSDVLDAFEFEKHDDPLRDKWNTLQFLEKSFESKFESASELIQGGELAAIKERNFQLAKLNNLCFRVRESIKRRQDLEKKLRTLSQDTDNELLFLMLENERRKKSSVIIEFLSEIIREKSKRLTAEEQGFVNQNEVKPLILDLSARINRLNSILETKNTCIRRLSNQ.

This is an uncharacterized protein from Saccharomyces cerevisiae (strain ATCC 204508 / S288c) (Baker's yeast).